Here is a 181-residue protein sequence, read N- to C-terminus: ATP synthase subunit b (181 aa).

Residues Leu24–Val44 traverse the membrane as a helical segment.

It belongs to the ATPase B chain family. In terms of assembly, F-type ATPases have 2 components, F(1) - the catalytic core - and F(0) - the membrane proton channel. F(1) has five subunits: alpha(3), beta(3), gamma(1), delta(1), epsilon(1). F(0) has three main subunits: a(1), b(2) and c(10-14). The alpha and beta chains form an alternating ring which encloses part of the gamma chain. F(1) is attached to F(0) by a central stalk formed by the gamma and epsilon chains, while a peripheral stalk is formed by the delta and b chains.

The protein localises to the cell membrane. Functionally, f(1)F(0) ATP synthase produces ATP from ADP in the presence of a proton or sodium gradient. F-type ATPases consist of two structural domains, F(1) containing the extramembraneous catalytic core and F(0) containing the membrane proton channel, linked together by a central stalk and a peripheral stalk. During catalysis, ATP synthesis in the catalytic domain of F(1) is coupled via a rotary mechanism of the central stalk subunits to proton translocation. Component of the F(0) channel, it forms part of the peripheral stalk, linking F(1) to F(0). The polypeptide is ATP synthase subunit b (Mycoplasma capricolum subsp. capricolum (strain California kid / ATCC 27343 / NCTC 10154)).